We begin with the raw amino-acid sequence, 475 residues long: Probable dolichyl pyrophosphate Man9GlcNAc2 alpha-1,3-glucosyltransferase (475 aa).

The next 8 helical transmembrane spans lie at 114-133 (VVSA…AYSL), 161-181 (GHFQ…AAIL), 235-255 (AVVL…LQAV), 296-316 (MALV…VLLF), 322-342 (VGFL…SFQV), 385-405 (LLVP…CFDS), 418-438 (IANI…TVPA), and 441-461 (KYPD…FFLF).

Belongs to the ALG6/ALG8 glucosyltransferase family.

The protein resides in the endoplasmic reticulum membrane. The catalysed reaction is an alpha-D-Man-(1-&gt;2)-alpha-D-Man-(1-&gt;2)-alpha-D-Man-(1-&gt;3)-[alpha-D-Man-(1-&gt;2)-alpha-D-Man-(1-&gt;3)-[alpha-D-Man-(1-&gt;2)-alpha-D-Man-(1-&gt;6)]-alpha-D-Man-(1-&gt;6)]-beta-D-Man-(1-&gt;4)-beta-D-GlcNAc-(1-&gt;4)-alpha-D-GlcNAc-diphospho-di-trans,poly-cis-dolichol + a di-trans,poly-cis-dolichyl beta-D-glucosyl phosphate = an alpha-D-Glc-(1-&gt;3)-alpha-D-Man-(1-&gt;2)-alpha-D-Man-(1-&gt;2)-alpha-D-Man-(1-&gt;3)-[alpha-D-Man-(1-&gt;2)-alpha-D-Man-(1-&gt;3)-[alpha-D-Man-(1-&gt;2)-alpha-D-Man-(1-&gt;6)]-alpha-D-Man-(1-&gt;6)]-beta-D-Man-(1-&gt;4)-beta-D-GlcNAc-(1-&gt;4)-alpha-D-GlcNAc-diphospho-di-trans,poly-cis-dolichol + a di-trans,poly-cis-dolichyl phosphate + H(+). The protein operates within protein modification; protein glycosylation. Its function is as follows. Adds the first glucose residue to the lipid-linked oligosaccharide precursor for N-linked glycosylation. Transfers glucose from dolichyl phosphate glucose (Dol-P-Glc) onto the lipid-linked oligosaccharide Man(9)GlcNAc(2)-PP-Dol. Involved in cuticle differentiation. In Drosophila melanogaster (Fruit fly), this protein is Probable dolichyl pyrophosphate Man9GlcNAc2 alpha-1,3-glucosyltransferase (gny).